The sequence spans 269 residues: MTELDTIANPSDPAVQRIIDVTKPSRSNIKTTLIEDVEPLMHSIAAGVEFIEVYGSDSSPFPSELLDLCGRQNIPVRLIDSSIVNQLFKGERKAKTFGIARVPRPARFGDIASRRGDVVVLDGVKIVGNIGAIVRTSLALGASGIILVDSDITSIADRRLQRASRGYVFSLPVVLSGREEAIAFIRDSGMQLMTLKADGDISVKELGDNPDRLALLFGSEKGGPSDLFEEASSASVSIPMMSQTESLNVSVSLGIALHERIDRNLAANR.

Positions 135, 165, 195, 218, 238, and 247 each coordinate S-adenosyl-L-methionine.

The protein belongs to the class IV-like SAM-binding methyltransferase superfamily. RNA methyltransferase TsnR/AvirB family. As to quaternary structure, homodimer.

The enzyme catalyses adenosine(1067) in 23S rRNA + S-adenosyl-L-methionine = 2'-O-methyladenosine(1067) in 23S rRNA + S-adenosyl-L-homocysteine + H(+). Functionally, specifically methylates the adenosine-1067 in 23S ribosomal RNA. Confers resistance to antibiotic thiostrepton. This chain is 23S rRNA (adenosine(1067)-2'-O)-methyltransferase (tsnR), found in Streptomyces azureus.